Here is a 566-residue protein sequence, read N- to C-terminus: DBIRD complex subunit ZNF326 (566 aa).

2 disordered regions span residues 19-81 and 145-180; these read HCGV…ESYD and RPGF…GRGT. A compositionally biased stretch (gly residues) spans 59 to 73; it reads SHGGGGGGGGGGGNR. Positions 156–165 are enriched in low complexity; that stretch reads SYSSYSSFSS. The Bipartite nuclear localization signal motif lies at 240-263; that stretch reads KRKMMPQPYNKPGGTFIKKPKMTK. A disordered region spans residues 314–347; that stretch reads FGDSKGEGKSEEEEKRRIEARREKQRRRREKNSE. The span at 317–335 shows a compositional bias: basic and acidic residues; that stretch reads SKGEGKSEEEEKRRIEARR. 2 C2H2 AKAP95-type zinc fingers span residues 359–381 and 452–475; these read CSFC…SAAH and CSAC…SPDH. Residues 516–566 are disordered; it reads PFEINDQAQEQQTEEEDKAEEPAEGEEEEEEEEEEETEEQTDFTLDHTEDN. A compositionally biased stretch (acidic residues) spans 527–556; the sequence is QTEEEDKAEEPAEGEEEEEEEEEEETEEQT.

The protein belongs to the AKAP95 family. As to quaternary structure, component of the DBIRD complex.

It is found in the nucleus. In terms of biological role, core component of the DBIRD complex, a multiprotein complex that acts at the interface between core mRNP particles and RNA polymerase II (RNAPII) and integrates transcript elongation with the regulation of alternative splicing. In Gallus gallus (Chicken), this protein is DBIRD complex subunit ZNF326 (ZNF326).